A 610-amino-acid polypeptide reads, in one-letter code: UvrABC system protein C (610 aa).

The region spanning Asn16–Val94 is the GIY-YIG domain. Positions Asn204–Val239 constitute a UVR domain.

Belongs to the UvrC family. As to quaternary structure, interacts with UvrB in an incision complex.

It is found in the cytoplasm. In terms of biological role, the UvrABC repair system catalyzes the recognition and processing of DNA lesions. UvrC both incises the 5' and 3' sides of the lesion. The N-terminal half is responsible for the 3' incision and the C-terminal half is responsible for the 5' incision. In Vibrio cholerae serotype O1 (strain ATCC 39315 / El Tor Inaba N16961), this protein is UvrABC system protein C.